A 327-amino-acid chain; its full sequence is L-serine dehydratase/L-threonine deaminase (327 aa).

An N6-(pyridoxal phosphate)lysine modification is found at lysine 41.

This sequence belongs to the serine/threonine dehydratase family. In terms of assembly, homodimer. It depends on pyridoxal 5'-phosphate as a cofactor.

Its subcellular location is the cytoplasm. It carries out the reaction L-serine = pyruvate + NH4(+). The enzyme catalyses L-threonine = 2-oxobutanoate + NH4(+). It participates in carbohydrate biosynthesis; gluconeogenesis. Catalyzes the pyridoxal-phosphate-dependent dehydrative deamination of L-threonine and L-serine to ammonia and alpha-ketobutyrate and pyruvate, respectively. This chain is L-serine dehydratase/L-threonine deaminase (SDS), found in Bos taurus (Bovine).